We begin with the raw amino-acid sequence, 527 residues long: Matrix metalloproteinase-19 (527 aa).

The N-terminal stretch at 1 to 18 (MDWQQLWLAFLLPMTVSG) is a signal peptide. A propeptide spanning residues 19-98 (RALGPTEKEA…EDPFNQKSLK (80 aa)) is cleaved from the precursor. Residues 84 to 91 (PRCGLEDP) carry the Cysteine switch motif. Cysteine 86 is a binding site for Zn(2+). An N-linked (GlcNAc...) asparagine glycan is attached at asparagine 109. Histidine 213 is a binding site for Zn(2+). The active site involves glutamate 214. Residues histidine 217 and histidine 223 each contribute to the Zn(2+) site. Hemopexin repeat units follow at residues 286-333 (PNPC…WEGL), 334-372 (PGNL…FPMK), 377-425 (EPNL…FTGV), and 426-471 (PDRP…WMHC). A disulfide bond links cysteine 289 and cysteine 471. N-linked (GlcNAc...) asparagine glycans are attached at residues asparagine 464 and asparagine 479. Positions 473–500 (SQTPDTNSSTGDVTPSTTDTVLGTTPST) are disordered. A lipid anchor (GPI-anchor amidated aspartate) is attached at aspartate 512. Positions 513 to 527 (SASLSFSANVTLLGA) are cleaved as a propeptide — removed in mature form. Residue asparagine 521 is glycosylated (N-linked (GlcNAc...) asparagine).

This sequence belongs to the peptidase M10A family. The cofactor is Zn(2+). Ca(2+) is required as a cofactor. Activated by autolytic cleavage after Lys-98. In terms of processing, tyrosine phosphorylated by PKDCC/VLK. As to expression, highly expressed in the liver. Expressed in the arterial tunica media of large blood vessels.

It localises to the cell membrane. Its subcellular location is the secreted. The protein resides in the extracellular space. It is found in the extracellular matrix. In terms of biological role, endopeptidase that degrades various components of the extracellular matrix, such as aggrecan and cartilage oligomeric matrix protein (comp), during development, haemostasis and pathological conditions (arthritic disease). May also play a role in neovascularization or angiogenesis. Hydrolyzes collagen type IV, laminin, nidogen, nascin-C isoform, fibronectin, and type I gelatin. In Mus musculus (Mouse), this protein is Matrix metalloproteinase-19 (Mmp19).